Reading from the N-terminus, the 460-residue chain is Argininosuccinate lyase (460 aa).

The protein belongs to the lyase 1 family. Argininosuccinate lyase subfamily.

It localises to the cytoplasm. The catalysed reaction is 2-(N(omega)-L-arginino)succinate = fumarate + L-arginine. The protein operates within amino-acid biosynthesis; L-arginine biosynthesis; L-arginine from L-ornithine and carbamoyl phosphate: step 3/3. This Streptococcus uberis (strain ATCC BAA-854 / 0140J) protein is Argininosuccinate lyase.